We begin with the raw amino-acid sequence, 492 residues long: 2,3-bisphosphoglycerate-independent phosphoglycerate mutase (492 aa).

Asp11 and Ser61 together coordinate Mn(2+). Residue Ser61 is the Phosphoserine intermediate of the active site. Substrate contacts are provided by residues His118, Arg147–Asp148, Arg178, Arg184, Arg248–Arg251, and Lys320. Residues Asp386, His390, Asp427, His428, and His445 each contribute to the Mn(2+) site.

Belongs to the BPG-independent phosphoglycerate mutase family. As to quaternary structure, monomer. The cofactor is Mn(2+).

It catalyses the reaction (2R)-2-phosphoglycerate = (2R)-3-phosphoglycerate. It functions in the pathway carbohydrate degradation; glycolysis; pyruvate from D-glyceraldehyde 3-phosphate: step 3/5. Its function is as follows. Catalyzes the interconversion of 2-phosphoglycerate and 3-phosphoglycerate. This chain is 2,3-bisphosphoglycerate-independent phosphoglycerate mutase, found in Campylobacter jejuni subsp. jejuni serotype O:6 (strain 81116 / NCTC 11828).